The primary structure comprises 707 residues: Coiled-coil domain-containing protein 177 (707 aa).

2 disordered regions span residues 1–65 and 183–294; these read MVDP…EGGR and PSAG…SALT. Low complexity-rich tracts occupy residues 38-49, 183-215, and 243-258; these read AASSASASASAA, PSAG…PSSA, and ALSS…YSGE. Serine 311 carries the post-translational modification Phosphoserine. Residues 364–605 adopt a coiled-coil conformation; sequence GQWELQRVHA…LQHATQVAEE (242 aa). Disordered regions lie at residues 372–426, 454–581, 597–637, and 652–707; these read HAKQ…RSEE, KLQQ…EREH, QHAT…RDED, and ERSE…LDRK. Composition is skewed to basic and acidic residues over residues 377–392, 399–426, 454–484, 491–514, 543–581, 618–637, and 652–664; these read RERE…EQGR, VEER…RSEE, KLQQ…ERAQ, QRQE…RHEA, ENYE…EREH, RLEK…RDED, and ERSE…RRSA. The span at 665–675 shows a compositional bias: low complexity; it reads LESARSTARAS. Positions 677-707 are enriched in basic and acidic residues; that stretch reads HVREKVREETNTRSFDRMVREAQLHASLDRK.

The chain is Coiled-coil domain-containing protein 177 (CCDC177) from Homo sapiens (Human).